We begin with the raw amino-acid sequence, 149 residues long: Calmodulin (149 aa).

Ala-2 bears the N-acetylalanine mark. EF-hand domains lie at Glu-8–Asn-43, Pro-44–Asp-79, Asp-81–Lys-116, and Leu-117–Lys-149. Asp-21, Asp-23, Asp-25, Cys-27, Glu-32, Asp-57, Asp-59, Asn-61, Thr-63, Glu-68, Asp-94, Asp-96, Asp-98, and Glu-105 together coordinate Ca(2+). Lys-116 carries the post-translational modification N6,N6,N6-trimethyllysine. Ca(2+) contacts are provided by Asp-130, Asp-132, Asp-134, Gln-136, and Glu-141.

Belongs to the calmodulin family.

Its function is as follows. Calmodulin mediates the control of a large number of enzymes, ion channels and other proteins by Ca(2+). Among the enzymes to be stimulated by the calmodulin-Ca(2+) complex are a number of protein kinases and phosphatases. This chain is Calmodulin, found in Triticum aestivum (Wheat).